A 104-amino-acid chain; its full sequence is Sweet protein mabinlin-3 (104 aa).

Disulfide bonds link C4–C53, C17–C42, C43–C91, and C55–C99.

It belongs to the 2S seed storage albumins family. As to quaternary structure, heterodimer of a small A and a large B chain linked by disulfide bonds.

In terms of biological role, heat stable 2S seed storage protein having sweetness-inducing activity. In Capparis masaikai (Mabinlang), this protein is Sweet protein mabinlin-3.